Here is a 295-residue protein sequence, read N- to C-terminus: 4-hydroxy-tetrahydrodipicolinate synthase 1 (295 aa).

Threonine 46 contributes to the pyruvate binding site. Tyrosine 134 acts as the Proton donor/acceptor in catalysis. The active-site Schiff-base intermediate with substrate is the lysine 162. Position 204 (valine 204) interacts with pyruvate.

It belongs to the DapA family. As to quaternary structure, homotetramer; dimer of dimers.

It localises to the cytoplasm. It carries out the reaction L-aspartate 4-semialdehyde + pyruvate = (2S,4S)-4-hydroxy-2,3,4,5-tetrahydrodipicolinate + H2O + H(+). It participates in amino-acid biosynthesis; L-lysine biosynthesis via DAP pathway; (S)-tetrahydrodipicolinate from L-aspartate: step 3/4. Catalyzes the condensation of (S)-aspartate-beta-semialdehyde [(S)-ASA] and pyruvate to 4-hydroxy-tetrahydrodipicolinate (HTPA). The sequence is that of 4-hydroxy-tetrahydrodipicolinate synthase 1 from Halalkalibacterium halodurans (strain ATCC BAA-125 / DSM 18197 / FERM 7344 / JCM 9153 / C-125) (Bacillus halodurans).